Consider the following 307-residue polypeptide: 4-hydroxy-3-methylbut-2-enyl diphosphate reductase (307 aa).

Cys13 lines the [4Fe-4S] cluster pocket. (2E)-4-hydroxy-3-methylbut-2-enyl diphosphate contacts are provided by His42 and His75. Dimethylallyl diphosphate contacts are provided by His42 and His75. 2 residues coordinate isopentenyl diphosphate: His42 and His75. Cys97 is a [4Fe-4S] cluster binding site. His125 serves as a coordination point for (2E)-4-hydroxy-3-methylbut-2-enyl diphosphate. Residue His125 participates in dimethylallyl diphosphate binding. His125 provides a ligand contact to isopentenyl diphosphate. Glu127 acts as the Proton donor in catalysis. Thr165 serves as a coordination point for (2E)-4-hydroxy-3-methylbut-2-enyl diphosphate. A [4Fe-4S] cluster-binding site is contributed by Cys195. Residues Ser223, Ser224, Asn225, and Ser267 each coordinate (2E)-4-hydroxy-3-methylbut-2-enyl diphosphate. Dimethylallyl diphosphate-binding residues include Ser223, Ser224, Asn225, and Ser267. The isopentenyl diphosphate site is built by Ser223, Ser224, Asn225, and Ser267.

Belongs to the IspH family. The cofactor is [4Fe-4S] cluster.

The catalysed reaction is isopentenyl diphosphate + 2 oxidized [2Fe-2S]-[ferredoxin] + H2O = (2E)-4-hydroxy-3-methylbut-2-enyl diphosphate + 2 reduced [2Fe-2S]-[ferredoxin] + 2 H(+). It catalyses the reaction dimethylallyl diphosphate + 2 oxidized [2Fe-2S]-[ferredoxin] + H2O = (2E)-4-hydroxy-3-methylbut-2-enyl diphosphate + 2 reduced [2Fe-2S]-[ferredoxin] + 2 H(+). It participates in isoprenoid biosynthesis; dimethylallyl diphosphate biosynthesis; dimethylallyl diphosphate from (2E)-4-hydroxy-3-methylbutenyl diphosphate: step 1/1. The protein operates within isoprenoid biosynthesis; isopentenyl diphosphate biosynthesis via DXP pathway; isopentenyl diphosphate from 1-deoxy-D-xylulose 5-phosphate: step 6/6. In terms of biological role, catalyzes the conversion of 1-hydroxy-2-methyl-2-(E)-butenyl 4-diphosphate (HMBPP) into a mixture of isopentenyl diphosphate (IPP) and dimethylallyl diphosphate (DMAPP). Acts in the terminal step of the DOXP/MEP pathway for isoprenoid precursor biosynthesis. This is 4-hydroxy-3-methylbut-2-enyl diphosphate reductase from Chlamydia trachomatis serovar L2b (strain UCH-1/proctitis).